A 178-amino-acid chain; its full sequence is Conodipine-P3 (178 aa).

Positions 1 to 24 (MKLLAPVLWAMAALGVTWLVAVDS) are cleaved as a signal peptide. P38 is subject to 4-hydroxyproline. Residues P42 and P49 each carry the 4-hydroxyproline; partial modification. H54 is an active-site residue. The propeptide at 98–130 (KREVTSHRATSIAHSRLWKTALDQKSFLNRKAR) is interchain peptide. Q131 bears the Pyrrolidone carboxylic acid mark. P137 bears the 4-hydroxyproline; partial mark.

The protein belongs to the phospholipase A2 family. Group IX subfamily. As to quaternary structure, heterodimer of an alpha and a beta chain; probably disulfide-linked. It depends on Ca(2+) as a cofactor. As to expression, expressed by the venom duct.

Its subcellular location is the secreted. The catalysed reaction is a 1,2-diacyl-sn-glycero-3-phosphocholine + H2O = a 1-acyl-sn-glycero-3-phosphocholine + a fatty acid + H(+). Catalyzes the calcium-dependent hydrolysis of the 2-acyl groups in 3-sn-phosphoglycerides. The chain is Conodipine-P3 from Conus purpurascens (Purple cone).